The sequence spans 400 residues: Dehydrogenase efuE (400 aa).

NAD(+)-binding positions include 222-223 (AI), 303-305 (TAR), and D329. Residue R305 is part of the active site. Residue E334 is part of the active site. The active-site Proton donor is the H352. 352–355 (HLGG) serves as a coordination point for NAD(+).

The protein belongs to the D-isomer specific 2-hydroxyacid dehydrogenase family.

Its pathway is secondary metabolite biosynthesis; terpenoid biosynthesis. Its function is as follows. Dehydrogenase; part of the gene cluster that mediates the biosynthesis of enfumafungin, a glycosylated fernene-type triterpenoid with potent antifungal activity, mediated by its interaction with beta-1,3-glucan synthase and the fungal cell wall. The pathway begins with the terpene cyclase-glycosyl transferase fusion protein that most likely uses 2,3-oxidosqualene as substrate and catalyzes glycosylation immediately after cyclization. The fernene glycoside then could be processed by the desaturase efuI which catalyzes isomerization of a double bond established by efuA to form the core structure. The latter would then undergo a series of hydroxylations in unknown order at C-2, C-19, C-23 and C-25, which would be catalyzed by two of the three cytochrome P450 monooxygenases efuB, efuG or efuH. The hydroxy-group at C-25 becomes oxidized by the dehydrogenase efuE to enable a spontaneous, non-enzymatic hemiacetal formation with C-23. After hydroxylation at C-2, acetylation by the acetyltransferase efuC takes place. The final steps in enfumafungin biosynthesis require expansion of the 5-membered ring by lactonization via a Baeyer-Villiger reaction mediated by one of the BGC's cytochrome P450 monooxygenases (efuB, efuG or efuH) followed by ring cleavage. This type of reaction would establish a double bond between C-20 and C-21 which could be reduced by the reductase efuL to form the final product. This Hormonema carpetanum protein is Dehydrogenase efuE.